The following is a 61-amino-acid chain: DNA-directed RNA polymerase subunit Rpo6 (61 aa).

Belongs to the archaeal Rpo6/eukaryotic RPB6 RNA polymerase subunit family. As to quaternary structure, part of the RNA polymerase complex.

The protein resides in the cytoplasm. It carries out the reaction RNA(n) + a ribonucleoside 5'-triphosphate = RNA(n+1) + diphosphate. Functionally, DNA-dependent RNA polymerase (RNAP) catalyzes the transcription of DNA into RNA using the four ribonucleoside triphosphates as substrates. This Thermoplasma acidophilum (strain ATCC 25905 / DSM 1728 / JCM 9062 / NBRC 15155 / AMRC-C165) protein is DNA-directed RNA polymerase subunit Rpo6.